The primary structure comprises 78 residues: Defensin-like protein 171 (78 aa).

The N-terminal stretch at 1 to 23 (MAKTASSLVLPIIFLVMFALVEQ) is a signal peptide. Disulfide bonds link Cys27-Cys71, Cys34-Cys56, Cys40-Cys65, and Cys44-Cys67.

This sequence belongs to the DEFL family.

It is found in the secreted. In Arabidopsis thaliana (Mouse-ear cress), this protein is Defensin-like protein 171 (LCR61).